A 298-amino-acid chain; its full sequence is Short-chain dehydrogenase reductase 4 (298 aa).

An NAD(+)-binding site is contributed by Ile-50–Val-74. Ser-182 provides a ligand contact to substrate. Tyr-195 acts as the Proton acceptor in catalysis.

The protein belongs to the short-chain dehydrogenases/reductases (SDR) family.

This chain is Short-chain dehydrogenase reductase 4 (SDR4), found in Arabidopsis thaliana (Mouse-ear cress).